Reading from the N-terminus, the 1365-residue chain is Histone-lysine N-methyltransferase NSD2 (1365 aa).

Residues threonine 110 and threonine 114 each carry the phosphothreonine modification. Residue serine 121 is modified to Phosphoserine. The disordered stretch occupies residues 149–170; that stretch reads ADVSQSEENGQKPENKARRNRK. Serine 172 carries the post-translational modification Phosphoserine. The region spanning 222–286 is the PWWP 1 domain; that stretch reads VGDLVWSKVS…FEKSLVAFEG (65 aa). Residue serine 376 is modified to Phosphoserine. 2 disordered regions span residues 376–455 and 516–658; these read SSGV…RKGD and EDSG…SKKS. Threonine 422 carries the post-translational modification Phosphothreonine. The HMG box DNA-binding region spans 453-521; it reads KGDAASQFLV…VQAEEDSGNV (69 aa). Residue threonine 544 is modified to Phosphothreonine. The segment covering 552-567 has biased composition (basic and acidic residues); sequence DKHSLRKRDTITDKTA. The segment covering 580–590 has biased composition (polar residues); that stretch reads SLKSQAATKNL. Low complexity predominate over residues 606–622; sequence AASSALGFSKSSSPSAS. Serine 614 carries the phosphoserine modification. Over residues 632–648 the composition is skewed to acidic residues; it reads PGDEPSESPYESADETQ. 3 consecutive PHD-type zinc fingers follow at residues 667–713, 714–770, and 831–875; these read EYVC…CASG, IHSC…CHAS, and VSWC…CRAG. One can recognise a PWWP 2 domain in the interval 880–942; sequence FQDIIWVKLG…QARVFPYMEG (63 aa). The AWS domain maps to 1011–1061; the sequence is SEIPKCNCKPTDENPCGFDSECLNRMLMFECHPQVCPAGEFCQNQCFTKRQ. 7 residues coordinate Zn(2+): cysteine 1016, cysteine 1018, cysteine 1026, cysteine 1032, cysteine 1041, cysteine 1046, and cysteine 1052. The SET domain occupies 1063-1180; sequence PETKIIKTDG…AGTELTFNYN (118 aa). S-adenosyl-L-methionine-binding positions include tryptophan 1075, 1115–1118, and 1141–1142; these read THFY and NH. Position 1144 (cysteine 1144) interacts with Zn(2+). Asparagine 1186 contacts S-adenosyl-L-methionine. The Post-SET domain occupies 1187–1203; it reads EKTVCRCGASNCSGFLG. Cysteine 1191 contacts Zn(2+). Arginine 1192 lines the S-adenosyl-L-methionine pocket. Positions 1193 and 1198 each coordinate Zn(2+). The disordered stretch occupies residues 1207-1232; the sequence is KTSTTLSSEEKGKKTKKKTRRRRAKG. The span at 1219–1230 shows a compositional bias: basic residues; the sequence is KKTKKKTRRRRA. Residues 1239 to 1286 form a PHD-type 4; atypical zinc finger; the sequence is EDECFRCGDGGQLVLCDRKFCTKAYHLSCLGLGKRPFGKWECPWHHCD. Residues 1333–1365 form a disordered region; the sequence is VRSTKTEKPPPEPGKPKGKRRRRRGWRRVTEGK. Over residues 1348-1359 the composition is skewed to basic residues; it reads PKGKRRRRRGWR.

It belongs to the class V-like SAM-binding methyltransferase superfamily. Histone-lysine methyltransferase family. SET2 subfamily. In terms of assembly, interacts with HDAC1. Interacts (via PHD-type zinc fingers 1, 2 and 3) with SALL1. Interacts (via PHD-type 1, 2 and 3) with SALL4. Interacts with NANOG. Interacts with OGT. Interacts (via HMG box) with NKX2-5. In terms of tissue distribution, widely expressed. Predominantly expressed in thymus and testis.

The protein resides in the nucleus. It is found in the chromosome. Its subcellular location is the cytoplasm. The protein localises to the nucleolus. The enzyme catalyses L-lysyl(36)-[histone H3] + S-adenosyl-L-methionine = N(6)-methyl-L-lysyl(36)-[histone H3] + S-adenosyl-L-homocysteine + H(+). The catalysed reaction is L-lysyl(36)-[histone H3] + 2 S-adenosyl-L-methionine = N(6),N(6)-dimethyl-L-lysyl(36)-[histone H3] + 2 S-adenosyl-L-homocysteine + 2 H(+). Histone methyltransferase which specifically dimethylates nucleosomal histone H3 at 'Lys-36' (H3K36me2). Also monomethylates nucleosomal histone H3 at 'Lys-36' (H3K36me) in vitro. Does not trimethylate nucleosomal histone H3 at 'Lys-36' (H3K36me3). However, specifically trimethylates histone H3 at 'Lys-36' (H3K36me3) at euchromatic regions in embryonic stem (ES) cells. By methylating histone H3 at 'Lys-36', involved in the regulation of gene transcription during various biological processes. In ES cells, associates with developmental transcription factors such as SALL1 and represses inappropriate gene transcription mediated by histone deacetylation. During heart development, associates with transcription factor NKX2-5 to repress transcription of NKX2-5 target genes. Plays an essential role in adipogenesis, by regulating expression of genes involved in pre-adipocyte differentiation. During T-cell receptor (TCR) and CD28-mediated T-cell activation, promotes the transcription of transcription factor BCL6 which is required for follicular helper T (Tfh) cell differentiation. During B-cell development, required for the generation of the B1 lineage. During B2 cell activation, may contribute to the control of isotype class switch recombination (CRS), splenic germinal center formation, and the humoral immune response. Plays a role in class switch recombination of the immunoglobulin heavy chain (IgH) locus during B-cell activation. By regulating the methylation of histone H3 at 'Lys-36' and histone H4 at 'Lys-20' at the IgH locus, involved in TP53BP1 recruitment to the IgH switch region and promotes the transcription of IgA. Functionally, histone methyltransferase which specifically dimethylates nucleosomal histone H3 at 'Lys-36' (H3K36me2). Its function is as follows. Histone methyltransferase which specifically dimethylates nucleosomal histone H3 at 'Lys-36' (H3K36me2). Methylation of histone H3 at 'Lys-27' is controversial. Mono-, di- or tri-methylates histone H3 at 'Lys-27' (H3K27me, H3K27me2 and H3K27me3). Does not methylate histone H3 at 'Lys-27'. May act as a transcription regulator that binds DNA and suppresses IL5 transcription through HDAC recruitment. This Homo sapiens (Human) protein is Histone-lysine N-methyltransferase NSD2.